Reading from the N-terminus, the 83-residue chain is Gas vesicle protein G (83 aa).

Belongs to the gas vesicle GvpG family. GvpF to GvpM interact with each other in vitro, and may form multi-subunit complex(es).

It is found in the gas vesicle. Its function is as follows. Proteins GvpF to GvpM might be involved in nucleating gas vesicle formation. A minor component of the gas vesicle. Gas vesicles are hollow, gas filled proteinaceous nanostructures found in some microorganisms. They allow positioning of halobacteria at the optimal depth for growth in the poorly aerated, shallow brine pools of their habitat. Functionally, expression of a 9.5 kb mc-vac DNA fragment containing 2 divergently transcribed regions (gvpD-gvpE-gvpF-gvpG-gvpH-gvpI-gvpJ-gvpK-gvpL-gvpM and gvpA-gvpC-gvpN-gvpO) allows H.volcanii to produce gas vesicles. This Haloferax mediterranei (strain ATCC 33500 / DSM 1411 / JCM 8866 / NBRC 14739 / NCIMB 2177 / R-4) (Halobacterium mediterranei) protein is Gas vesicle protein G.